The primary structure comprises 453 residues: Ribulose bisphosphate carboxylase large chain (453 aa).

A propeptide spanning residues 1 to 2 is cleaved from the precursor; that stretch reads MS. N-acetylproline is present on Pro3. N6,N6,N6-trimethyllysine is present on Lys14. Substrate contacts are provided by Asn123 and Thr173. Lys175 acts as the Proton acceptor in catalysis. Lys177 contacts substrate. Mg(2+)-binding residues include Lys201, Asp203, and Glu204. Lys201 carries the N6-carboxylysine modification. His294 serves as the catalytic Proton acceptor. Positions 295, 327, and 379 each coordinate substrate.

It belongs to the RuBisCO large chain family. Type I subfamily. Heterohexadecamer of 8 large chains and 8 small chains; disulfide-linked. The disulfide link is formed within the large subunit homodimers. Mg(2+) serves as cofactor. Post-translationally, the disulfide bond which can form in the large chain dimeric partners within the hexadecamer appears to be associated with oxidative stress and protein turnover.

It localises to the plastid. The protein localises to the chloroplast. The enzyme catalyses 2 (2R)-3-phosphoglycerate + 2 H(+) = D-ribulose 1,5-bisphosphate + CO2 + H2O. It catalyses the reaction D-ribulose 1,5-bisphosphate + O2 = 2-phosphoglycolate + (2R)-3-phosphoglycerate + 2 H(+). In terms of biological role, ruBisCO catalyzes two reactions: the carboxylation of D-ribulose 1,5-bisphosphate, the primary event in carbon dioxide fixation, as well as the oxidative fragmentation of the pentose substrate in the photorespiration process. Both reactions occur simultaneously and in competition at the same active site. In Cruciata glabra (Slender crosswort), this protein is Ribulose bisphosphate carboxylase large chain.